The chain runs to 414 residues: Protein HIM1 (414 aa).

May participate in the control of processing of mutational intermediates appearing during error-prone bypass of DNA damage. The polypeptide is Protein HIM1 (HIM1) (Saccharomyces cerevisiae (strain ATCC 204508 / S288c) (Baker's yeast)).